Reading from the N-terminus, the 489-residue chain is Probable guanine deaminase (489 aa).

Zn(2+) contacts are provided by His-100 and His-102. Substrate contacts are provided by residues 102-105 (HVSQ), 231-232 (RF), 258-261 (HLSE), and Asp-348. Residues His-258 and Asp-348 each coordinate Zn(2+).

This sequence belongs to the metallo-dependent hydrolases superfamily. ATZ/TRZ family. Requires Zn(2+) as cofactor.

Its subcellular location is the cytoplasm. The enzyme catalyses guanine + H2O + H(+) = xanthine + NH4(+). Its pathway is purine metabolism; guanine degradation; xanthine from guanine: step 1/1. In terms of biological role, catalyzes the hydrolytic deamination of guanine, producing xanthine and ammonia. The chain is Probable guanine deaminase (GUD1) from Saccharomyces cerevisiae (strain ATCC 204508 / S288c) (Baker's yeast).